The following is a 929-amino-acid chain: Bifunctional glutamine synthetase adenylyltransferase/adenylyl-removing enzyme (929 aa).

The interval 1–422 is adenylyl removase; it reads MTTPISTSRA…TRHFEQIFAV (422 aa). Residues 429 to 929 form an adenylyl transferase region; sequence LGTFARIRPE…FQLWEDVFGT (501 aa).

The protein belongs to the GlnE family. It depends on Mg(2+) as a cofactor.

It carries out the reaction [glutamine synthetase]-O(4)-(5'-adenylyl)-L-tyrosine + phosphate = [glutamine synthetase]-L-tyrosine + ADP. The enzyme catalyses [glutamine synthetase]-L-tyrosine + ATP = [glutamine synthetase]-O(4)-(5'-adenylyl)-L-tyrosine + diphosphate. Its function is as follows. Involved in the regulation of glutamine synthetase GlnA, a key enzyme in the process to assimilate ammonia. When cellular nitrogen levels are high, the C-terminal adenylyl transferase (AT) inactivates GlnA by covalent transfer of an adenylyl group from ATP to specific tyrosine residue of GlnA, thus reducing its activity. Conversely, when nitrogen levels are low, the N-terminal adenylyl removase (AR) activates GlnA by removing the adenylyl group by phosphorolysis, increasing its activity. The regulatory region of GlnE binds the signal transduction protein PII (GlnB) which indicates the nitrogen status of the cell. The chain is Bifunctional glutamine synthetase adenylyltransferase/adenylyl-removing enzyme from Nitrosomonas eutropha (strain DSM 101675 / C91 / Nm57).